The primary structure comprises 374 residues: MELEDPTMADSTIKLTVKFGGKSIPLSVSPDCTVKDLKSQLQPITNVLPRGQKLIFKGKVLVETSTLKQSDVGSGAKLMLMASQGLHQGEGPILKEASIRPISRTVVSDKVDQRKPSVLVDKNRTDRWKATGVIALAQANLKEIPEEVWDCGSGVRVLDISENFIKEVPAKISSFGSMQKLFLQGNGLSDESIQWEGIASLKRLMLLSISHNNLTVLPSAMGSLTSLRQLDVTNNKLTSLPNELGLLTQLEILKANNNRITSLPESIGNCSFLMEVDLSANIISELPETFTKLRNLKTLELNNTGLKTLPSALFKMCLQLSTLGLHNTEITVEFLRQFEGYDDFDERRRTKHQKQLDFRVVGSGQFDEGADKSW.

Residues 13–87 enclose the Ubiquitin-like domain; that stretch reads IKLTVKFGGK…LMLMASQGLH (75 aa). 9 LRR repeats span residues 128-151, 152-175, 177-200, 201-224, 225-248, 250-270, 272-293, 294-316, and 318-340; these read WKAT…VWDC, GSGV…ISSF, SMQK…GIAS, LKRL…MGSL, TSLR…GLLT, LEIL…IGNC, FLME…FTKL, RNLK…LFKM, and LQLS…QFEG.

The protein is LRR repeats and ubiquitin-like domain-containing protein At2g30105 of Arabidopsis thaliana (Mouse-ear cress).